We begin with the raw amino-acid sequence, 363 residues long: Type 3 secretion system translocon protein SctB (363 aa).

Polar residues predominate over residues 1-16 (MEIQNTKPTQTLYTDI). A disordered region spans residues 1 to 30 (MEIQNTKPTQTLYTDISTKQTQSSSETQKS). Residues 17–30 (STKQTQSSSETQKS) are compositionally biased toward low complexity. The segment at 33-73 (YQQIAAHIPLNVGKNPVLTTTLNDDQLLKLSEQVQHDSEII) is ipgC chaperone binding domain. A helical transmembrane segment spans residues 99-120 (ISSLSSNAVSLIISVAVLLSAL).

It belongs to the SctB/SipC family. As to quaternary structure, the core secretion machinery of the T3SS is composed of approximately 20 different proteins, including cytoplasmic components, a base, an export apparatus and a needle. This subunit is involved in the formation of a pore, called the translocon, in host membrane. Interacts with IpaB/SctE. Interacts with the molecular chaperone IpgC, which prevents premature association with IpaB/SctE within the cytoplasm of Shigella cells. Does not interact with CDC42 or RAC1 GTPases in vitro.

The protein resides in the secreted. The protein localises to the host membrane. Interaction with the membrane is affected by the pH. In terms of biological role, component of the type III secretion system (T3SS), also called injectisome, which is used to inject bacterial effector proteins into eukaryotic host cells. IpaB/SctE and IpaC/SctB are inserted into the host membrane where they form a pore and allow the translocation of effector proteins into the cytosol of target cells. Induction and secretion of IpaC/SctB comprise the final step in triggering the induction of full type III secretion. Functionally, required for efficient dissemination. Necessary for lysis of the two cellular membranes that surround bacteria in protrusions during cell-to-cell spread. Contribute to actin nucleation in vitro, which may be a necessary step in Shigella invasion. The protein is Type 3 secretion system translocon protein SctB of Shigella flexneri.